A 329-amino-acid polypeptide reads, in one-letter code: uncharacterized protein (329 aa).

Coiled coils occupy residues 57–120 and 225–251; these read KKEE…QEVT and QRQRQEEVQEVLQEAEKTHQATLGNMM.

This is an uncharacterized protein from Homo sapiens (Human).